Reading from the N-terminus, the 217-residue chain is 3-demethoxyubiquinol 3-hydroxylase (217 aa).

Glu-66, Glu-96, His-99, Glu-148, Glu-180, and His-183 together coordinate Fe cation.

This sequence belongs to the COQ7 family. It depends on Fe cation as a cofactor.

The protein localises to the cell membrane. The enzyme catalyses a 5-methoxy-2-methyl-3-(all-trans-polyprenyl)benzene-1,4-diol + AH2 + O2 = a 3-demethylubiquinol + A + H2O. It functions in the pathway cofactor biosynthesis; ubiquinone biosynthesis. Functionally, catalyzes the hydroxylation of 2-nonaprenyl-3-methyl-6-methoxy-1,4-benzoquinol during ubiquinone biosynthesis. In Ralstonia pickettii (strain 12J), this protein is 3-demethoxyubiquinol 3-hydroxylase.